Here is a 312-residue protein sequence, read N- to C-terminus: D-alanine--D-alanine ligase (312 aa).

The region spanning 108 to 308 (KLVWQQTGIP…YSELVVKVLS (201 aa)) is the ATP-grasp domain. 138–193 (VAKLGMPLFVKPASEGSSVAVEKVKSADALPAALEEAAKHDKIVIVEKSIEGGGEY) contacts ATP. 3 residues coordinate Mg(2+): aspartate 262, glutamate 275, and asparagine 277.

This sequence belongs to the D-alanine--D-alanine ligase family. Requires Mg(2+) as cofactor. The cofactor is Mn(2+).

The protein localises to the cytoplasm. It catalyses the reaction 2 D-alanine + ATP = D-alanyl-D-alanine + ADP + phosphate + H(+). It participates in cell wall biogenesis; peptidoglycan biosynthesis. Functionally, cell wall formation. The sequence is that of D-alanine--D-alanine ligase from Burkholderia thailandensis (strain ATCC 700388 / DSM 13276 / CCUG 48851 / CIP 106301 / E264).